Here is a 202-residue protein sequence, read N- to C-terminus: Na(+)-translocating NADH-quinone reductase subunit E (202 aa).

6 helical membrane passes run 11–31, 39–59, 81–101, 114–134, 144–164, and 180–200; these read AVFI…FLAV, FGLG…NNLI, FLKF…LEMA, GIFL…AFMV, VVFG…LAAV, and LGIT…FSGV.

This sequence belongs to the NqrDE/RnfAE family. Composed of six subunits; NqrA, NqrB, NqrC, NqrD, NqrE and NqrF.

The protein resides in the cell inner membrane. The catalysed reaction is a ubiquinone + n Na(+)(in) + NADH + H(+) = a ubiquinol + n Na(+)(out) + NAD(+). In terms of biological role, NQR complex catalyzes the reduction of ubiquinone-1 to ubiquinol by two successive reactions, coupled with the transport of Na(+) ions from the cytoplasm to the periplasm. NqrA to NqrE are probably involved in the second step, the conversion of ubisemiquinone to ubiquinol. The protein is Na(+)-translocating NADH-quinone reductase subunit E of Idiomarina loihiensis (strain ATCC BAA-735 / DSM 15497 / L2-TR).